A 314-amino-acid chain; its full sequence is MTISRTPKFSAGELNVYSAPADVAAVTRALRTAGRRIVLVPTMGALHEGHLTLVRAAKRTPGAVVVVSIFVNPLQFGPNEDLNAYPRTLEDDLTALRAEGVEIVFTPTGSDMYPDGTRTSVHPGPLGDDLEGSSRPGHFAGVLTVVLKLFSIVRPDRAYFGEKDYQQLTLLRQMVADLNVDVQIVGVPTVRESDGLALSSRNRYLDKDQREQAGALSAALLAGKYAAAGGAEAALDAARAVLDEVPALEVDYLQVRDPMLGPAPAEGQARLLVAARLGRTRLIDNIAIDVGASAGIDGHPRVGNDQNHELPWRN.

Residue 43–50 participates in ATP binding; the sequence is MGALHEGH. The active-site Proton donor is His50. Position 75 (Gln75) interacts with (R)-pantoate. Gln75 lines the beta-alanine pocket. The tract at residues 112 to 131 is disordered; sequence MYPDGTRTSVHPGPLGDDLE. An ATP-binding site is contributed by 161 to 164; the sequence is GEKD. Gln167 serves as a coordination point for (R)-pantoate. Residues Val190 and 198-201 each bind ATP; that span reads LSSR.

It belongs to the pantothenate synthetase family. As to quaternary structure, homodimer.

It localises to the cytoplasm. It carries out the reaction (R)-pantoate + beta-alanine + ATP = (R)-pantothenate + AMP + diphosphate + H(+). It functions in the pathway cofactor biosynthesis; (R)-pantothenate biosynthesis; (R)-pantothenate from (R)-pantoate and beta-alanine: step 1/1. Catalyzes the condensation of pantoate with beta-alanine in an ATP-dependent reaction via a pantoyl-adenylate intermediate. The polypeptide is Pantothenate synthetase (Mycolicibacterium smegmatis (strain ATCC 700084 / mc(2)155) (Mycobacterium smegmatis)).